The sequence spans 581 residues: Arginine--tRNA ligase (581 aa).

A 'HIGH' region motif is present at residues 126–136 (PNLAKEMHVGH).

Belongs to the class-I aminoacyl-tRNA synthetase family. Monomer.

It localises to the cytoplasm. It catalyses the reaction tRNA(Arg) + L-arginine + ATP = L-arginyl-tRNA(Arg) + AMP + diphosphate. The chain is Arginine--tRNA ligase from Shewanella baltica (strain OS155 / ATCC BAA-1091).